We begin with the raw amino-acid sequence, 813 residues long: Calpain-7 (813 aa).

Position 1 is an N-acetylmethionine (Met1). Position 95 is a phosphothreonine (Thr95). Residues 232 to 540 form the Calpain catalytic domain; the sequence is RERFAYPMPF…YDVVYLSWNP (309 aa). Catalysis depends on residues Cys290, His458, and Asn478. The interval 541 to 701 is domain III; sequence ALFKESTCIH…INGKWSGQSA (161 aa). The domain N stretch occupies residues 702–813; it reads GGCGNFQETH…TVPIKTTQLQ (112 aa).

It belongs to the peptidase C2 family. Ubiquitous.

It localises to the nucleus. In terms of biological role, calcium-regulated non-lysosomal thiol-protease. In Mus musculus (Mouse), this protein is Calpain-7 (Capn7).